We begin with the raw amino-acid sequence, 963 residues long: MHC class II regulatory factor RFX1 (963 aa).

Disordered stretches follow at residues 1 to 88 (MATQ…APSP), 105 to 126 (ASET…VPTQ), 174 to 218 (QSPA…GTPA), and 361 to 392 (SSSE…GSSG). Residues 20–41 (PQAPPQALPQPPPPAAPQPPAA) show a composition bias toward pro residues. Positions 42–67 (ATPQPQYVTELQSPQPQTQPPGSQKQ) are enriched in low complexity. The residue at position 54 (serine 54) is a Phosphoserine. Residues 75–87 (APAPSQPATPAPS) show a composition bias toward pro residues. Polar residues-rich tracts occupy residues 107 to 119 (ETVS…STAS), 181 to 196 (KSGQ…QQVH), and 204 to 214 (VQANNSTSKTA). A compositionally biased stretch (low complexity) spans 361–372 (SSSEAGASNSSV). Gly residues predominate over residues 373–392 (GAGGNGGGGSSGGGSGGSSG). Positions 423–498 (TVQWLLDNYE…YHYYGLRIKA (76 aa)) form a DNA-binding region, RFX-type winged-helix. Residues 899–948 (SLNPLDPDKDEEEEEEEESEDELPQDISLAAGSESPALGPEALEPPAKLA) are disordered. The segment covering 906–922 (DKDEEEEEEEESEDELP) has biased composition (acidic residues). Over residues 932–947 (ESPALGPEALEPPAKL) the composition is skewed to low complexity. A phosphoserine mark is found at serine 962 and serine 963.

It belongs to the RFX family. As to quaternary structure, homodimer; binds DNA as a homodimer. Heterodimer; heterodimerizes with RFX2 and RFX3.

It localises to the nucleus. Regulatory factor essential for MHC class II genes expression. Binds to the X boxes of MHC class II genes. In Mus musculus (Mouse), this protein is MHC class II regulatory factor RFX1 (Rfx1).